A 276-amino-acid polypeptide reads, in one-letter code: Beta-lactamase OXA-1 (276 aa).

Residues 1 to 25 (MKNTIHINFAIFLIIANIIYSSASA) form the signal peptide. S71 (acyl-ester intermediate) is an active-site residue. A beta-lactam contacts are provided by S71, K74, S118, T216, and A218. An N6-carboxylysine modification is found at K74.

Belongs to the class-D beta-lactamase family. In terms of assembly, monomer.

The protein localises to the periplasm. It catalyses the reaction a beta-lactam + H2O = a substituted beta-amino acid. With respect to regulation, inhibited by penicillin sulfones. Only weakly inhibited by clavulanic acid and sulbactam. Class D beta-lactamase which confers resistance to the beta-lactam antibiotics, including amoxicillin and ticarcillin. Acts via hydrolysis of the beta-lactam ring. Has penicillin- and cephalosporin-hydrolyzing activities. The chain is Beta-lactamase OXA-1 from Escherichia coli.